The chain runs to 875 residues: Serine/threonine-protein kinase D2 (875 aa).

Low complexity predominate over residues 1–12 (MAAAPSHPAGLP). The tract at residues 1-35 (MAAAPSHPAGLPGSPGPGSPPPPGGLDLQSPPPLL) is disordered. Pro residues predominate over residues 14 to 35 (SPGPGSPPPPGGLDLQSPPPLL). At Ser-30 the chain carries Phosphoserine. Residue Tyr-87 is modified to Phosphotyrosine. The Phorbol-ester/DAG-type 1 zinc-finger motif lies at 138-188 (PHALTVHSYRAPAFCDHCGEMLFGLVRQGLKCDGCGLNYHKRCAFSIPNNC). Residues Ser-197, Ser-198, Ser-200, Ser-203, Ser-206, Ser-211, Ser-212, and Ser-214 each carry the phosphoserine modification. Residues 224 to 247 (RSTTDLLPRRPPSSSSSSSSSSFY) form a disordered region. Residues 236–245 (SSSSSSSSSS) are compositionally biased toward low complexity. A Phosphoserine; by CSNK1D and CSNK1E modification is found at Ser-244. Ser-245 bears the Phosphoserine mark. The Phorbol-ester/DAG-type 2 zinc finger occupies 265–315 (PHTFLIHSYTRPTVCQACKKLLKGLFRQGLQCKDCKFNCHKRCATRVPNDC). A disordered region spans residues 332–374 (DYSEADKSSISDELEDSGVIPGSHSESALHASEEEEGEGHKAQ). The PH domain occupies 398–510 (TTLREGWVVH…WETAIRQALM (113 aa)). Tyr-408 carries the phosphotyrosine modification. Tyr-439 is subject to Phosphotyrosine; by ABL1. Ser-519 carries the post-translational modification Phosphoserine. The 257-residue stretch at 552 to 808 (IFPDEVLGSG…VDKSLSHPWL (257 aa)) folds into the Protein kinase domain. ATP-binding positions include 558-566 (LGSGQFGVV) and Lys-581. Asp-675 serves as the catalytic Proton acceptor. Ser-707 bears the Phosphoserine; by PKC mark. A Phosphoserine; by autocatalysis modification is found at Ser-711. Residue Tyr-718 is modified to Phosphotyrosine; by ABL1. Positions 725 to 727 (LNQ) match the Important for ABL1-mediated Tyr-718 phosphorylation motif. Ser-873 is subject to Phosphoserine; by autocatalysis.

Belongs to the protein kinase superfamily. CAMK Ser/Thr protein kinase family. PKD subfamily. As to quaternary structure, interacts (via C-terminus) with LCK. Interacts (via N-terminus and zing-finger domain 1 and 2) with PRKCD in response to oxidative stress; the interaction is independent of PRKD2 tyrosine phosphorylation. It depends on Mg(2+) as a cofactor. Post-translationally, phosphorylation of Ser-873 correlates with the activation status of the kinase. Ser-707 is probably phosphorylated by PKC. Phosphorylation at Ser-244 by CSNK1D and CSNK1E promotes nuclear localization and substrate targeting. Phosphorylation at Ser-244, Ser-707 and Ser-711 is required for nuclear localization. Phosphorylated at Tyr-438 by ABL1 in response to oxidative stress. Phosphorylated at Tyr-718 by ABL1 specifically in response to oxidative stress; requires prior phosphorylation at Ser-707 or/and Ser-711.

It is found in the cytoplasm. The protein resides in the cell membrane. The protein localises to the golgi apparatus. It localises to the trans-Golgi network. The enzyme catalyses L-seryl-[protein] + ATP = O-phospho-L-seryl-[protein] + ADP + H(+). It carries out the reaction L-threonyl-[protein] + ATP = O-phospho-L-threonyl-[protein] + ADP + H(+). With respect to regulation, activated by DAG and phorbol esters. Phorbol-ester/DAG-type domains bind DAG, mediating translocation to membranes. Autophosphorylation of Ser-711 and phosphorylation of Ser-707 by PKC relieves auto-inhibition by the PH domain. Catalytic activity is further increased by phosphorylation at Tyr-718 in response to oxidative stress. Serine/threonine-protein kinase that converts transient diacylglycerol (DAG) signals into prolonged physiological effects downstream of PKC, and is involved in the regulation of cell proliferation via MAPK1/3 (ERK1/2) signaling, oxidative stress-induced NF-kappa-B activation, inhibition of HDAC7 transcriptional repression, signaling downstream of T-cell antigen receptor (TCR) and cytokine production, and plays a role in Golgi membrane trafficking, angiogenesis, secretory granule release and cell adhesion. May potentiate mitogenesis induced by the neuropeptide bombesin by mediating an increase in the duration of MAPK1/3 (ERK1/2) signaling, which leads to accumulation of immediate-early gene products including FOS that stimulate cell cycle progression. In response to oxidative stress, is phosphorylated at Tyr-438 and Tyr-718 by ABL1, which leads to the activation of PRKD2 without increasing its catalytic activity, and mediates activation of NF-kappa-B. In response to the activation of the gastrin receptor CCKBR, is phosphorylated at Ser-244 by CSNK1D and CSNK1E, translocates to the nucleus, phosphorylates HDAC7, leading to nuclear export of HDAC7 and inhibition of HDAC7 transcriptional repression of NR4A1/NUR77. Upon TCR stimulation, is activated independently of ZAP70, translocates from the cytoplasm to the nucleus and is required for interleukin-2 (IL2) promoter up-regulation. During adaptive immune responses, is required in peripheral T-lymphocytes for the production of the effector cytokines IL2 and IFNG after TCR engagement and for optimal induction of antibody responses to antigens. In epithelial cells stimulated with lysophosphatidic acid (LPA), is activated through a PKC-dependent pathway and mediates LPA-stimulated interleukin-8 (IL8) secretion via a NF-kappa-B-dependent pathway. During TCR-induced T-cell activation, interacts with and is activated by the tyrosine kinase LCK, which results in the activation of the NFAT transcription factors. In the trans-Golgi network (TGN), regulates the fission of transport vesicles that are on their way to the plasma membrane and in polarized cells is involved in the transport of proteins from the TGN to the basolateral membrane. Plays an important role in endothelial cell proliferation and migration prior to angiogenesis, partly through modulation of the expression of KDR/VEGFR2 and FGFR1, two key growth factor receptors involved in angiogenesis. In secretory pathway, is required for the release of chromogranin-A (CHGA)-containing secretory granules from the TGN. Downstream of PRKCA, plays important roles in angiotensin-2-induced monocyte adhesion to endothelial cells. This is Serine/threonine-protein kinase D2 (Prkd2) from Mus musculus (Mouse).